The following is a 492-amino-acid chain: Catalase-1 (492 aa).

Residues His65 and Asn138 contribute to the active site. Tyr348 serves as a coordination point for heme.

The protein belongs to the catalase family. In terms of assembly, homotetramer and heterotetramer. At least six or seven isozymes are produced from a mixture of 3 gene products. Interacts with NCA1. Interacts with LSD1. Heme is required as a cofactor.

The protein resides in the cytoplasm. The enzyme catalyses 2 H2O2 = O2 + 2 H2O. Functionally, occurs in almost all aerobically respiring organisms and serves to protect cells from the toxic effects of hydrogen peroxide. This chain is Catalase-1 (CAT1), found in Arabidopsis thaliana (Mouse-ear cress).